Reading from the N-terminus, the 525-residue chain is GMP synthase [glutamine-hydrolyzing] (525 aa).

One can recognise a Glutamine amidotransferase type-1 domain in the interval 9–207 (RILILDFGSQ…VQDICGCEAL (199 aa)). The active-site Nucleophile is the Cys-86. Active-site residues include His-181 and Glu-183. Positions 208-400 (WTASNIVEDA…LGLPYDMVYR (193 aa)) constitute a GMPS ATP-PPase domain. ATP is bound at residue 235–241 (SGGVDSS).

As to quaternary structure, homodimer.

It carries out the reaction XMP + L-glutamine + ATP + H2O = GMP + L-glutamate + AMP + diphosphate + 2 H(+). The protein operates within purine metabolism; GMP biosynthesis; GMP from XMP (L-Gln route): step 1/1. Functionally, catalyzes the synthesis of GMP from XMP. In Pseudomonas putida (strain GB-1), this protein is GMP synthase [glutamine-hydrolyzing].